Here is a 412-residue protein sequence, read N- to C-terminus: DNA primase DnaG (412 aa).

A Toprim domain is found at 165–243 (PELIIVEGRA…KLDYVARAPT (79 aa)). Mg(2+)-binding residues include glutamate 171, aspartate 216, and aspartate 218.

It belongs to the archaeal DnaG primase family. In terms of assembly, forms a ternary complex with MCM helicase and DNA. Component of the archaeal exosome complex. Mg(2+) is required as a cofactor.

The catalysed reaction is ssDNA + n NTP = ssDNA/pppN(pN)n-1 hybrid + (n-1) diphosphate.. Its function is as follows. RNA polymerase that catalyzes the synthesis of short RNA molecules used as primers for DNA polymerase during DNA replication. Also part of the exosome, which is a complex involved in RNA degradation. Acts as a poly(A)-binding protein that enhances the interaction between heteromeric, adenine-rich transcripts and the exosome. The polypeptide is DNA primase DnaG (Sulfolobus acidocaldarius (strain ATCC 33909 / DSM 639 / JCM 8929 / NBRC 15157 / NCIMB 11770)).